The following is an 875-amino-acid chain: Serine/threonine-protein kinase ATG1 (875 aa).

One can recognise a Protein kinase domain in the interval 22-318 (YSIGPEIGKG…FNEFFNDPLI (297 aa)). ATP is bound by residues 28 to 36 (IGKGSFATV) and lysine 51. Aspartate 168 acts as the Proton acceptor in catalysis. The segment covering 367 to 379 (EKSKQDLPAREVS) has biased composition (basic and acidic residues). Disordered regions lie at residues 367–422 (EKSK…QPHN) and 470–515 (INPR…DRRI). Positions 380–389 (THASESQTKA) are enriched in polar residues. The segment covering 390 to 405 (VDTRPSSRDEEIKEII) has biased composition (basic and acidic residues). Polar residues-rich tracts occupy residues 406 to 420 (NKNS…SIQP), 473 to 490 (RRTS…NNMQ), and 497 to 508 (LRSNSSGSQRRP).

This sequence belongs to the protein kinase superfamily. Ser/Thr protein kinase family. APG1/unc-51/ULK1 subfamily. Homodimer. Forms a ternary complex with ATG13 and ATG17.

Its subcellular location is the cytoplasm. It localises to the preautophagosomal structure membrane. The enzyme catalyses L-seryl-[protein] + ATP = O-phospho-L-seryl-[protein] + ADP + H(+). It catalyses the reaction L-threonyl-[protein] + ATP = O-phospho-L-threonyl-[protein] + ADP + H(+). In terms of biological role, serine/threonine protein kinase involved in the cytoplasm to vacuole transport (Cvt) and found to be essential in autophagy, where it is required for the formation of autophagosomes. Involved in the clearance of protein aggregates which cannot be efficiently cleared by the proteasome. Required for selective autophagic degradation of the nucleus (nucleophagy) as well as for mitophagy which contributes to regulate mitochondrial quantity and quality by eliminating the mitochondria to a basal level to fulfill cellular energy requirements and preventing excess ROS production. Also involved in endoplasmic reticulum-specific autophagic process, in selective removal of ER-associated degradation (ERAD) substrates. Plays a key role in ATG9 and ATG23 cycling through the pre-autophagosomal structure and is necessary to promote ATG18 binding to ATG9 through phosphorylation of ATG9. Catalyzes phosphorylation of ATG4, decreasing the interaction between ATG4 and ATG8 and impairing deconjugation of PE-conjugated forms of ATG8. This is Serine/threonine-protein kinase ATG1 from Debaryomyces hansenii (strain ATCC 36239 / CBS 767 / BCRC 21394 / JCM 1990 / NBRC 0083 / IGC 2968) (Yeast).